The sequence spans 206 residues: LexA repressor (206 aa).

The H-T-H motif DNA-binding region spans 28–48; it reads RAEIATRLGFKSANAAEEHLK. Catalysis depends on for autocatalytic cleavage activity residues Ser123 and Lys160.

It belongs to the peptidase S24 family. In terms of assembly, homodimer.

It carries out the reaction Hydrolysis of Ala-|-Gly bond in repressor LexA.. Represses a number of genes involved in the response to DNA damage (SOS response), including recA and lexA. In the presence of single-stranded DNA, RecA interacts with LexA causing an autocatalytic cleavage which disrupts the DNA-binding part of LexA, leading to derepression of the SOS regulon and eventually DNA repair. This is LexA repressor from Shewanella putrefaciens (strain CN-32 / ATCC BAA-453).